Reading from the N-terminus, the 719-residue chain is Probable phosphatidylinositol phosphate kinase DDB_G0267588 (719 aa).

The tract at residues 47–261 (VFSPIPPPPS…SDSPNRVRLN (215 aa)) is disordered. Composition is skewed to low complexity over residues 57–77 (TTDN…TDNT) and 87–104 (IENN…PNSI). The segment covering 107 to 129 (ANKKDSIELEEDKEHSIKRKDGS) has biased composition (basic and acidic residues). Residues 172–184 (FDATNDNHNPQEV) are compositionally biased toward polar residues. Residues 199–217 (TTTTTTTTTTTTSTNSTSN) show a composition bias toward low complexity. Polar residues-rich tracts occupy residues 218 to 228 (KLPNNGDNTVS) and 248 to 261 (ASGS…VRLN). Position 262 is a phosphothreonine (Thr262). One can recognise a PIPK domain in the interval 316 to 718 (NAVGKSMGTE…RFQEFLSTII (403 aa)). Residues 579–638 (RENEPPSPSLLRSTLEDSSDFESPSMEQSSAGQQQQQRGSGNYDNSGAGRDSTTGGAAPK) are disordered. The span at 606–619 (QSSAGQQQQQRGSG) shows a compositional bias: low complexity.

In terms of processing, phosphorylated at Thr-262 by pkgB.

Functionally, may be involved in signaling events that underlie chemotaxis via the chemoattractant-mediated pkgB phosphorylation. The sequence is that of Probable phosphatidylinositol phosphate kinase DDB_G0267588 from Dictyostelium discoideum (Social amoeba).